The following is a 429-amino-acid chain: Lysophosphatidic acid phosphatase type 6 (429 aa).

A mitochondrion-targeting transit peptide spans 1–32 (MISRVFKLRMWAPVGVLTSLTYCLHQRRVALA). A substrate binding region spans residues 58–169 (RHGARSPLKP…VFIRSTNIYR (112 aa)). His-59 (nucleophile) is an active-site residue. Asp-336 acts as the Proton donor in catalysis.

The protein belongs to the histidine acid phosphatase family. Monomer. Detected in brain (at protein level).

The protein resides in the mitochondrion. The enzyme catalyses a phosphate monoester + H2O = an alcohol + phosphate. The catalysed reaction is 1-(9Z-octadecenoyl)-sn-glycero-3-phosphate + H2O = 1-(9Z-octadecenoyl)-sn-glycerol + phosphate. Functionally, hydrolyzes lysophosphatidic acid (LPA) containing a medium length fatty acid chain to the corresponding monoacylglycerol. Has highest activity with lysophosphatidic acid containing myristate (C14:0), monounsaturated oleate (C18:1) or palmitate (C16:0), and lower activity with C18:0 and C6:0 lysophosphatidic acid. The polypeptide is Lysophosphatidic acid phosphatase type 6 (ACP6) (Bos taurus (Bovine)).